Reading from the N-terminus, the 343-residue chain is MKKHLNTLFVTTQGSYLSKEGECVLISIDRVEKTRIPLHMLNGIVCFGQVSCSPFLLGHCAQLGVAVTFLTEHGRFLCQMQGPVKGNILLRRAQYRMADNYDQTATLARLFVIGKIGNARVTLARALRDHPEKTDGEKLKNAQHVLAGCIRRLQEATDQELIRGIEGEAAKAYFSVFDECITADDPAFRFEGRSRRPPLDRVNCLLSFVYTLMTHDIRSALESCGLDPAAGFLHKDRPGRPSLALDMLEEFRSYIGDRLVLSLINRGQIHAKDFDISETGAVAMKDDARKTLITAYQQRKQEEIEHPFVGEKMAVGLLWHMQAMLLARYIRGDIDMYPPFVWR.

Residues Glu166, His234, and Glu249 each contribute to the Mn(2+) site.

This sequence belongs to the CRISPR-associated endonuclease Cas1 family. In terms of assembly, homodimer, forms a heterotetramer with a Cas2 homodimer. Mg(2+) serves as cofactor. The cofactor is Mn(2+).

In terms of biological role, CRISPR (clustered regularly interspaced short palindromic repeat), is an adaptive immune system that provides protection against mobile genetic elements (viruses, transposable elements and conjugative plasmids). CRISPR clusters contain spacers, sequences complementary to antecedent mobile elements, and target invading nucleic acids. CRISPR clusters are transcribed and processed into CRISPR RNA (crRNA). Acts as a dsDNA endonuclease. Involved in the integration of spacer DNA into the CRISPR cassette. This Chlorobaculum tepidum (strain ATCC 49652 / DSM 12025 / NBRC 103806 / TLS) (Chlorobium tepidum) protein is CRISPR-associated endonuclease Cas1 1.